The sequence spans 129 residues: Histone H2A.2 (129 aa).

Lys5 is subject to N6-acetyllysine. The residue at position 108 (Gln108) is an N5-methylglutamine.

It belongs to the histone H2A family. In terms of assembly, the nucleosome is a histone octamer containing two molecules each of H2A, H2B, H3 and H4 assembled in one H3-H4 heterotetramer and two H2A-H2B heterodimers. The octamer wraps approximately 147 bp of DNA. In terms of processing, acetylated by ESA1 to form H2AK4ac.

It is found in the nucleus. It localises to the chromosome. Core component of nucleosome which plays a central role in DNA double strand break (DSB) repair. Nucleosomes wrap and compact DNA into chromatin, limiting DNA accessibility to the cellular machineries which require DNA as a template. Histones thereby play a central role in transcription regulation, DNA repair, DNA replication and chromosomal stability. DNA accessibility is regulated via a complex set of post-translational modifications of histones, also called histone code, and nucleosome remodeling. The polypeptide is Histone H2A.2 (HTA2) (Lodderomyces elongisporus (strain ATCC 11503 / CBS 2605 / JCM 1781 / NBRC 1676 / NRRL YB-4239) (Yeast)).